The following is a 714-amino-acid chain: A-kinase anchor protein 5 (714 aa).

Disordered stretches follow at residues Met-1–Arg-146 and Val-243–Thr-333. Residues Met-1–Glu-164 form an essential to the intracellular anchoring function region. A phosphoserine mark is found at Ser-4 and Ser-22. Residues Ile-10–Thr-32 are compositionally biased toward basic and acidic residues. Cys-36 carries S-palmitoyl cysteine lipidation. Positions Phe-37–Ala-50 are enriched in basic residues. 2 stretches are compositionally biased toward basic and acidic residues: residues Thr-54–Pro-63 and Lys-88–Glu-100. An AKAP CaM-binding motif is present at residues Ala-74–Glu-94. The S-palmitoyl cysteine moiety is linked to residue Cys-123. Residues Val-243–Gln-268 are compositionally biased toward polar residues. Residues Gly-285 to Gly-301 show a composition bias toward basic and acidic residues. One copy of the 1; approximate repeat lies at Leu-305–Ser-312. Residues Leu-305–Val-597 form a 28 X 8 AA repeats of V-G-Q-A-E-E-A-T region. Polar residues predominate over residues Glu-310–Ser-323. Residues Leu-322 to Thr-329 form a 2; approximate repeat. The 3; approximate repeat unit spans residues Val-330–Thr-337. The stretch at Leu-350–Thr-357 is one 4; approximate repeat. Residues Val-358–Val-365 form a 5; approximate repeat. Residues Leu-366–Lys-373 form a 6; approximate repeat. The stretch at Val-398–Ile-405 is one 7; approximate repeat. An 8; approximate repeat occupies Met-414–Thr-421. 5 repeat units span residues Val-430–Thr-437, Val-438–Thr-445, Val-446–Thr-453, Val-454–Thr-461, and Val-462–Thr-469. The stretch at Val-470 to Thr-477 is one 14; approximate repeat. The 15; approximate repeat unit spans residues Val-486–Ile-493. A run of 4 repeats spans residues Val-494–Thr-501, Val-502–Thr-509, Val-510–Thr-517, and Val-518–Thr-525. The stretch at Val-526–Thr-533 is one 20; approximate repeat. Residues Val-534–Thr-541 form repeat 21. One copy of the 22; approximate repeat lies at Val-542–Ala-549. One copy of the 23; approximate repeat lies at Val-550–Ile-557. The stretch at Val-558–Thr-565 is one 24; approximate repeat. Repeat 25 spans residues Val-566 to Thr-573. The 26; approximate repeat unit spans residues Val-574–Thr-581. The stretch at Val-582–Ile-589 is one 27; approximate repeat. One copy of the 28; approximate repeat lies at Val-590–Val-597. The interval Tyr-675–Glu-696 is RII-beta subunit binding domain. Residues Gln-697–Gln-714 are tethers NFATC2 to CRAC channels.

As to quaternary structure, binding protein for dimer of the RII-beta regulatory subunit of cAMP-dependent protein kinase (PKA) and also for the protein kinase C (PKC) and the phosphatase calcineurin (PP2B). Each enzyme is inhibited when bound to the anchoring protein. Also binds the beta2-adrenergic receptor. Part of a complex containing AKAP5, ADCY5, ADCY6 and PDE4C. Interacts with ADCY8, and enhances its phosphorylation at lipid rafts. Interacts with ORAI1 (isoform alpha) (via N-terminus) upon store depletion and in response to LTC4. Does not interact with ORAI2 and ORAI3 paralogs. Interacts (via leucine zipper domain) with NFATC2/NFAT1. Interacts with calmodulin; the interaction is calcium-independent. Interacts with KCNQ2; the interaction may help KCNQ2 channel complex to retain calcium-bound calmodulin. Interacts with KCNK2; the channel is recruited to postsynaptic microdomains by AKAP5 where it can integrate neurotransmitter receptor signals. Part of a complex composed of AKAP5 and ADRB2. In terms of processing, palmitoylated. Palmitoylation at Cys-36 and Cys-123 plays a key role in the targeting of AKAP5 to lipid rafts. Palmitoylation by ZDHHC2 is required for AKAP5 function in LTP-stimulated recycling endosome exocytosis.

The protein resides in the postsynaptic recycling endosome membrane. It is found in the cell projection. It localises to the dendrite. Its subcellular location is the postsynaptic cell membrane. Functionally, multivalent scaffold protein that anchors the cAMP-dependent protein kinase/PKA to cytoskeletal and/or organelle-associated proteins, targeting the signal carried by cAMP to specific intracellular effectors. Association with the beta2-adrenergic receptor (beta2-AR) not only regulates beta2-AR signaling pathway, but also the activation by PKA by switching off the beta2-AR signaling cascade. Plays a role in long term synaptic potentiation by regulating protein trafficking from the dendritic recycling endosomes to the plasma membrane and controlling both structural and functional plasticity at excitatory synapses. In hippocampal pyramidal neurons, recruits KCNK2/TREK-1 channel at postsynaptic dense bodies microdomains and converts it to a leak channel no longer sensitive to stimulation by arachidonic acid, acidic pH or mechanical stress, nor inhibited by Gq-coupled receptors but still under the negative control of Gs-coupled receptors. Associates with ORAI1 pore-forming subunit of CRAC channels in Ca(2+) signaling microdomains where it recruits NFATC2/NFAT1 and couples store-operated Ca(2+) influx to calmodulin and calcineurin signaling and activation of NFAT-dependent transcriptional responses. This chain is A-kinase anchor protein 5 (Akap5), found in Rattus norvegicus (Rat).